A 173-amino-acid polypeptide reads, in one-letter code: Pectinesterase inhibitor 2 (173 aa).

Positions 1 to 25 (MAAYLTNRVLMSSLMFFVMTGSLNA) are cleaved as a signal peptide. The cysteines at positions 34 and 43 are disulfide-linked. Residues asparagine 39 and asparagine 63 are each glycosylated (N-linked (GlcNAc...) asparagine). Cysteine 99 and cysteine 139 are oxidised to a cystine.

The protein belongs to the PMEI family. In terms of assembly, interacts with PPME1. Highest expression in flowers. Expressed exclusively at the pollen tube tip.

It localises to the secreted. The protein localises to the extracellular space. It is found in the apoplast. Inhibits pectin methylesterase (PME) from flowers, siliques and pollen tube. The protein is Pectinesterase inhibitor 2 of Arabidopsis thaliana (Mouse-ear cress).